A 253-amino-acid polypeptide reads, in one-letter code: tRNA pseudouridine synthase A (253 aa).

Asp53 functions as the Nucleophile in the catalytic mechanism. Substrate is bound at residue Tyr111.

This sequence belongs to the tRNA pseudouridine synthase TruA family. In terms of assembly, homodimer.

The enzyme catalyses uridine(38/39/40) in tRNA = pseudouridine(38/39/40) in tRNA. In terms of biological role, formation of pseudouridine at positions 38, 39 and 40 in the anticodon stem and loop of transfer RNAs. This is tRNA pseudouridine synthase A from Chlorobium luteolum (strain DSM 273 / BCRC 81028 / 2530) (Pelodictyon luteolum).